Here is a 393-residue protein sequence, read N- to C-terminus: Phosphoenolpyruvate/phosphate translocator 3, chloroplastic (393 aa).

The N-terminal 65 residues, 1–65 (MQRAAAASRA…LSGGRAVTAR (65 aa)), are a transit peptide targeting the chloroplast. The next 7 helical transmembrane spans lie at 89-109 (LAET…NIYF), 124-144 (YTIT…MWAL), 164-183 (AAGH…KVAV), 195-217 (FFTV…LGSL), 232-249 (LSFN…NLLY), 270-290 (INLF…LMLF), and 362-382 (TPIS…VFLY). The EamA domain maps to 123-228 (PYTITAFQLA…PIVGGVALAS (106 aa)).

Belongs to the TPT transporter family. PPT (TC 2.A.7.9) subfamily.

It is found in the plastid. Its subcellular location is the chloroplast membrane. Phosphoenolpyruvate/phosphate translocator that transports phosphoenolpyruvate (PEP) and dihydroxyacetone phosphate. This chain is Phosphoenolpyruvate/phosphate translocator 3, chloroplastic (PPT3), found in Oryza sativa subsp. japonica (Rice).